The chain runs to 176 residues: Cytochrome b (176 aa).

Transmembrane regions (helical) follow at residues 33–53 (FGSL…FLAM), 77–98 (WMLR…YLHV), and 113–133 (WNVG…GYVL). 2 residues coordinate heme b: His-83 and His-97.

This sequence belongs to the cytochrome b family. In terms of assembly, the cytochrome bc1 complex contains 11 subunits: 3 respiratory subunits (MT-CYB, CYC1 and UQCRFS1), 2 core proteins (UQCRC1 and UQCRC2) and 6 low-molecular weight proteins (UQCRH/QCR6, UQCRB/QCR7, UQCRQ/QCR8, UQCR10/QCR9, UQCR11/QCR10 and a cleavage product of UQCRFS1). This cytochrome bc1 complex then forms a dimer. Heme b is required as a cofactor.

It is found in the mitochondrion inner membrane. Its function is as follows. Component of the ubiquinol-cytochrome c reductase complex (complex III or cytochrome b-c1 complex) that is part of the mitochondrial respiratory chain. The b-c1 complex mediates electron transfer from ubiquinol to cytochrome c. Contributes to the generation of a proton gradient across the mitochondrial membrane that is then used for ATP synthesis. In Idionycteris phyllotis (Allen's big-eared bat), this protein is Cytochrome b (MT-CYB).